The sequence spans 466 residues: Fumarate hydratase class II (466 aa).

Residues 99-101 (SGT), 129-132 (HPND), 139-141 (SSN), and T187 each bind substrate. H188 serves as the catalytic Proton donor/acceptor. S318 is a catalytic residue. Substrate is bound by residues S319 and 324 to 326 (KVN).

The protein belongs to the class-II fumarase/aspartase family. Fumarase subfamily. Homotetramer.

The protein localises to the cytoplasm. It catalyses the reaction (S)-malate = fumarate + H2O. It participates in carbohydrate metabolism; tricarboxylic acid cycle; (S)-malate from fumarate: step 1/1. Its function is as follows. Involved in the TCA cycle. Catalyzes the stereospecific interconversion of fumarate to L-malate. This is Fumarate hydratase class II from Thermus thermophilus (strain ATCC BAA-163 / DSM 7039 / HB27).